Here is a 79-residue protein sequence, read N- to C-terminus: Small ribosomal subunit protein bS18 (79 aa).

Belongs to the bacterial ribosomal protein bS18 family. In terms of assembly, part of the 30S ribosomal subunit. Forms a tight heterodimer with protein bS6.

Functionally, binds as a heterodimer with protein bS6 to the central domain of the 16S rRNA, where it helps stabilize the platform of the 30S subunit. This is Small ribosomal subunit protein bS18 from Pseudarthrobacter chlorophenolicus (strain ATCC 700700 / DSM 12829 / CIP 107037 / JCM 12360 / KCTC 9906 / NCIMB 13794 / A6) (Arthrobacter chlorophenolicus).